A 417-amino-acid chain; its full sequence is Gamma-glutamyl phosphate reductase (417 aa).

It belongs to the gamma-glutamyl phosphate reductase family.

The protein localises to the cytoplasm. It carries out the reaction L-glutamate 5-semialdehyde + phosphate + NADP(+) = L-glutamyl 5-phosphate + NADPH + H(+). Its pathway is amino-acid biosynthesis; L-proline biosynthesis; L-glutamate 5-semialdehyde from L-glutamate: step 2/2. Its function is as follows. Catalyzes the NADPH-dependent reduction of L-glutamate 5-phosphate into L-glutamate 5-semialdehyde and phosphate. The product spontaneously undergoes cyclization to form 1-pyrroline-5-carboxylate. This chain is Gamma-glutamyl phosphate reductase, found in Escherichia coli O157:H7.